A 154-amino-acid polypeptide reads, in one-letter code: Small heat shock protein IbpB (154 aa).

Residues 26–137 enclose the sHSP domain; the sequence is GQEPQGFPPY…QPQRIAIGSA (112 aa).

Belongs to the small heat shock protein (HSP20) family. Homodimer. Forms homomultimers of about 100-150 subunits at optimal growth temperatures. Conformation changes to oligomers at high temperatures or high ionic concentrations. The decrease in size of the multimers is accompanied by an increase in chaperone activity.

Its subcellular location is the cytoplasm. In terms of biological role, associates with aggregated proteins, together with IbpA, to stabilize and protect them from irreversible denaturation and extensive proteolysis during heat shock and oxidative stress. Aggregated proteins bound to the IbpAB complex are more efficiently refolded and reactivated by the ATP-dependent chaperone systems ClpB and DnaK/DnaJ/GrpE. Its activity is ATP-independent. The sequence is that of Small heat shock protein IbpB from Yersinia pseudotuberculosis serotype O:1b (strain IP 31758).